A 199-amino-acid chain; its full sequence is Ribonuclease P protein component 3 (199 aa).

It belongs to the eukaryotic/archaeal RNase P protein component 3 family. Consists of a catalytic RNA component and at least 4-5 protein subunits.

It localises to the cytoplasm. The enzyme catalyses Endonucleolytic cleavage of RNA, removing 5'-extranucleotides from tRNA precursor.. Part of ribonuclease P, a protein complex that generates mature tRNA molecules by cleaving their 5'-ends. In Archaeoglobus fulgidus (strain ATCC 49558 / DSM 4304 / JCM 9628 / NBRC 100126 / VC-16), this protein is Ribonuclease P protein component 3.